Consider the following 122-residue polypeptide: MFKKVDRKASRQKKQMSIRNKISGTPERPRLSVFRSNTNIFAQLIDDVNGVTLVSASTIDKALKGSIANGGNIEAAKAVGKAIAERAKEKGIDAIVFDRSGYKYTGRVAALADAAREAGLSF.

Basic residues predominate over residues 1-16; the sequence is MFKKVDRKASRQKKQM. A disordered region spans residues 1-29; the sequence is MFKKVDRKASRQKKQMSIRNKISGTPERP.

This sequence belongs to the universal ribosomal protein uL18 family. In terms of assembly, part of the 50S ribosomal subunit; part of the 5S rRNA/L5/L18/L25 subcomplex. Contacts the 5S and 23S rRNAs.

Functionally, this is one of the proteins that bind and probably mediate the attachment of the 5S RNA into the large ribosomal subunit, where it forms part of the central protuberance. The chain is Large ribosomal subunit protein uL18 from Fusobacterium nucleatum subsp. nucleatum (strain ATCC 25586 / DSM 15643 / BCRC 10681 / CIP 101130 / JCM 8532 / KCTC 2640 / LMG 13131 / VPI 4355).